We begin with the raw amino-acid sequence, 304 residues long: Acetyl-coenzyme A carboxylase carboxyl transferase subunit beta (304 aa).

The 270-residue stretch at Leu-25 to Gln-294 folds into the CoA carboxyltransferase N-terminal domain.

This sequence belongs to the AccD/PCCB family. In terms of assembly, acetyl-CoA carboxylase is a heterohexamer composed of biotin carboxyl carrier protein (AccB), biotin carboxylase (AccC) and two subunits each of ACCase subunit alpha (AccA) and ACCase subunit beta (AccD).

The protein resides in the cytoplasm. The enzyme catalyses N(6)-carboxybiotinyl-L-lysyl-[protein] + acetyl-CoA = N(6)-biotinyl-L-lysyl-[protein] + malonyl-CoA. The protein operates within lipid metabolism; malonyl-CoA biosynthesis; malonyl-CoA from acetyl-CoA: step 1/1. In terms of biological role, component of the acetyl coenzyme A carboxylase (ACC) complex. Biotin carboxylase (BC) catalyzes the carboxylation of biotin on its carrier protein (BCCP) and then the CO(2) group is transferred by the transcarboxylase to acetyl-CoA to form malonyl-CoA. In Sinorhizobium fredii (strain NBRC 101917 / NGR234), this protein is Acetyl-coenzyme A carboxylase carboxyl transferase subunit beta.